Consider the following 370-residue polypeptide: Phospho-2-dehydro-3-deoxyheptonate aldolase, tyrosine-inhibited (370 aa).

The protein belongs to the class-I DAHP synthase family.

It carries out the reaction D-erythrose 4-phosphate + phosphoenolpyruvate + H2O = 7-phospho-2-dehydro-3-deoxy-D-arabino-heptonate + phosphate. The protein operates within metabolic intermediate biosynthesis; chorismate biosynthesis; chorismate from D-erythrose 4-phosphate and phosphoenolpyruvate: step 1/7. Its activity is regulated as follows. Inhibited by tyrosine. Functionally, stereospecific condensation of phosphoenolpyruvate (PEP) and D-erythrose-4-phosphate (E4P) giving rise to 3-deoxy-D-arabino-heptulosonate-7-phosphate (DAHP). The polypeptide is Phospho-2-dehydro-3-deoxyheptonate aldolase, tyrosine-inhibited (ARO4) (Candida albicans (strain SC5314 / ATCC MYA-2876) (Yeast)).